The following is a 285-amino-acid chain: Pseudouridine-5'-phosphate glycosidase (285 aa).

The active-site Proton donor is the Glu17. Positions 77 and 97 each coordinate substrate. Asp126 serves as a coordination point for Mn(2+). 128–130 (SQD) serves as a coordination point for substrate. The Nucleophile role is filled by Lys147.

This sequence belongs to the pseudouridine-5'-phosphate glycosidase family. In terms of assembly, homotrimer. The cofactor is Mn(2+).

It carries out the reaction D-ribose 5-phosphate + uracil = psi-UMP + H2O. In terms of biological role, catalyzes the reversible cleavage of pseudouridine 5'-phosphate (PsiMP) to ribose 5-phosphate and uracil. Functions biologically in the cleavage direction, as part of a pseudouridine degradation pathway. The protein is Pseudouridine-5'-phosphate glycosidase of Thermotoga sp. (strain RQ2).